The primary structure comprises 228 residues: Large ribosomal subunit protein bL25 (228 aa).

Positions 198 to 228 (AAIAEAQSAEAAEEKAEAEAEATNEKNDTEE) are disordered. Basic and acidic residues predominate over residues 209–228 (AEEKAEAEAEATNEKNDTEE).

It belongs to the bacterial ribosomal protein bL25 family. CTC subfamily. Part of the 50S ribosomal subunit; part of the 5S rRNA/L5/L18/L25 subcomplex. Contacts the 5S rRNA. Binds to the 5S rRNA independently of L5 and L18.

In terms of biological role, this is one of the proteins that binds to the 5S RNA in the ribosome where it forms part of the central protuberance. In Methylorubrum populi (strain ATCC BAA-705 / NCIMB 13946 / BJ001) (Methylobacterium populi), this protein is Large ribosomal subunit protein bL25.